The following is a 506-amino-acid chain: Histidine ammonia-lyase (506 aa).

The segment at residues 143–145 (ASG) is a cross-link (5-imidazolinone (Ala-Gly)). Serine 144 carries the 2,3-didehydroalanine (Ser) modification.

Belongs to the PAL/histidase family. Post-translationally, contains an active site 4-methylidene-imidazol-5-one (MIO), which is formed autocatalytically by cyclization and dehydration of residues Ala-Ser-Gly.

The protein localises to the cytoplasm. It catalyses the reaction L-histidine = trans-urocanate + NH4(+). It participates in amino-acid degradation; L-histidine degradation into L-glutamate; N-formimidoyl-L-glutamate from L-histidine: step 1/3. This chain is Histidine ammonia-lyase, found in Salmonella paratyphi C (strain RKS4594).